We begin with the raw amino-acid sequence, 647 residues long: Neutral endopeptidase (647 aa).

In terms of domain architecture, Peptidase M13 spans 1–647; the sequence is MRRYLAVRGG…LDPEDRITIW (647 aa). A Zn(2+)-binding site is contributed by histidine 496. Residue glutamate 497 is part of the active site. Residues histidine 500 and glutamate 556 each contribute to the Zn(2+) site. Aspartate 560 serves as the catalytic Proton donor.

This sequence belongs to the peptidase M13 family. It depends on Zn(2+) as a cofactor.

The chain is Neutral endopeptidase (pepO) from Lactobacillus helveticus (Lactobacillus suntoryeus).